Consider the following 309-residue polypeptide: MGLRLSFMGTPHFSVPILHALLDAGHDIVAVYSQPPRPAGRRGLKMIPSPVQNAAQAKSIPVFTPQTLKTAEKQAQFAELAVDVAIVVAYGLFLPKAILETPRLGCFNAHASLLPRWRGAAPIQRAIMAGDKETGMMIMKMDEGLDTGSIALSRSIPITDNTTADELSNKLSHIGAELMIEMLSTLEKGQLKLTPQSGENITYASKIKKEETRIDWTKPAEFIHRQIRALSPFPGCWCNMNIAGREERVKILGSRLTKGPSREIGWIEPNSLIIHCGQGRIEITSLQKSGGKILDSAAFLRGARLSTVF.

A (6S)-5,6,7,8-tetrahydrofolate-binding site is contributed by 112–115 (SLLP).

It belongs to the Fmt family.

The enzyme catalyses L-methionyl-tRNA(fMet) + (6R)-10-formyltetrahydrofolate = N-formyl-L-methionyl-tRNA(fMet) + (6S)-5,6,7,8-tetrahydrofolate + H(+). In terms of biological role, attaches a formyl group to the free amino group of methionyl-tRNA(fMet). The formyl group appears to play a dual role in the initiator identity of N-formylmethionyl-tRNA by promoting its recognition by IF2 and preventing the misappropriation of this tRNA by the elongation apparatus. This Bartonella quintana (strain Toulouse) (Rochalimaea quintana) protein is Methionyl-tRNA formyltransferase.